The following is a 404-amino-acid chain: Multidrug resistance protein MdtG (404 aa).

A run of 11 helical transmembrane segments spans residues Leu19–Val39, Leu56–Ala76, Leu90–Ile110, Ala113–Val133, Thr144–Ala164, Pro171–Ile191, Leu222–Leu242, Ile254–Pro274, Ile288–Thr308, Phe317–Asn337, and Ala376–Leu396.

This sequence belongs to the major facilitator superfamily. DHA1 family. MdtG (TC 2.A.1.2.20) subfamily.

It is found in the cell inner membrane. This chain is Multidrug resistance protein MdtG, found in Salmonella choleraesuis (strain SC-B67).